The following is a 128-amino-acid chain: Aspartate 1-decarboxylase (128 aa).

Ser-25 acts as the Schiff-base intermediate with substrate; via pyruvic acid in catalysis. Ser-25 carries the post-translational modification Pyruvic acid (Ser). Position 57 (Thr-57) interacts with substrate. The Proton donor role is filled by Tyr-58. 73–75 (GSA) contributes to the substrate binding site.

This sequence belongs to the PanD family. In terms of assembly, heterooctamer of four alpha and four beta subunits. Pyruvate serves as cofactor. Post-translationally, is synthesized initially as an inactive proenzyme, which is activated by self-cleavage at a specific serine bond to produce a beta-subunit with a hydroxyl group at its C-terminus and an alpha-subunit with a pyruvoyl group at its N-terminus.

Its subcellular location is the cytoplasm. It catalyses the reaction L-aspartate + H(+) = beta-alanine + CO2. Its pathway is cofactor biosynthesis; (R)-pantothenate biosynthesis; beta-alanine from L-aspartate: step 1/1. In terms of biological role, catalyzes the pyruvoyl-dependent decarboxylation of aspartate to produce beta-alanine. This chain is Aspartate 1-decarboxylase, found in Paraburkholderia xenovorans (strain LB400).